The chain runs to 252 residues: Tumor necrosis factor ligand superfamily member 15 (252 aa).

Over 1 to 39 the chain is Cytoplasmic; that stretch reads MAEELGLGFGEGVPVEVLPEGCRHRPEARAGLAARSKAC. Residues 40-60 form a helical; Signal-anchor for type II membrane protein membrane-spanning segment; the sequence is LALTCCLLSFPILAGLSTLLM. At 61–252 the chain is on the extracellular side; the sequence is AGQLRVPGKD…DKTFFGAFLL (192 aa). A THD domain is found at 96-252; the sequence is PRAHLTIKKQ…DKTFFGAFLL (157 aa). Asparagine 137 carries N-linked (GlcNAc...) asparagine glycosylation. Cysteine 163 and cysteine 203 form a disulfide bridge. N-linked (GlcNAc...) asparagine glycosylation is present at asparagine 230.

The protein belongs to the tumor necrosis factor family. Homotrimer.

It is found in the membrane. In terms of biological role, receptor for TNFRSF25 and TNFRSF6B. Mediates activation of NF-kappa-B. Inhibits vascular endothelial growth and angiogenesis (in vitro). Promotes activation of caspases and apoptosis. Promotes splenocyte alloactivation. The protein is Tumor necrosis factor ligand superfamily member 15 (Tnfsf15) of Mus musculus (Mouse).